We begin with the raw amino-acid sequence, 393 residues long: Branched-chain-amino-acid aminotransferase, mitochondrial (393 aa).

Residues 1–27 constitute a mitochondrion transit peptide; sequence MAAATLGQVWARKLLPVPWLLCGSKRC. Substrate is bound at residue Y169. K230 carries the N6-(pyridoxal phosphate)lysine modification. The residue at position 322 (K322) is an N6-acetyllysine.

Belongs to the class-IV pyridoxal-phosphate-dependent aminotransferase family. Homodimer. It depends on pyridoxal 5'-phosphate as a cofactor.

The protein resides in the mitochondrion. It carries out the reaction L-leucine + 2-oxoglutarate = 4-methyl-2-oxopentanoate + L-glutamate. It catalyses the reaction L-isoleucine + 2-oxoglutarate = (S)-3-methyl-2-oxopentanoate + L-glutamate. The catalysed reaction is L-valine + 2-oxoglutarate = 3-methyl-2-oxobutanoate + L-glutamate. Functionally, catalyzes the first reaction in the catabolism of the essential branched chain amino acids leucine, isoleucine, and valine. May also function as a transporter of branched chain alpha-keto acids. This chain is Branched-chain-amino-acid aminotransferase, mitochondrial (Bcat2), found in Mus musculus (Mouse).